We begin with the raw amino-acid sequence, 478 residues long: Glutamate--tRNA ligase (478 aa).

The short motif at 23–33 is the 'HIGH' region element; it reads PSPTGFIHLGN. A compositionally biased stretch (basic and acidic residues) spans 130 to 145; it reads KQKPRYDGTWRPEEGK. The disordered stretch occupies residues 130-153; the sequence is KQKPRYDGTWRPEEGKTLPPVPEG. The 'KMSKS' region signature appears at 255–259; it reads KMSKR. K258 serves as a coordination point for ATP.

This sequence belongs to the class-I aminoacyl-tRNA synthetase family. Glutamate--tRNA ligase type 1 subfamily. In terms of assembly, monomer.

The protein localises to the cytoplasm. It carries out the reaction tRNA(Glu) + L-glutamate + ATP = L-glutamyl-tRNA(Glu) + AMP + diphosphate. In terms of biological role, catalyzes the attachment of glutamate to tRNA(Glu) in a two-step reaction: glutamate is first activated by ATP to form Glu-AMP and then transferred to the acceptor end of tRNA(Glu). This is Glutamate--tRNA ligase from Paracidovorax citrulli (strain AAC00-1) (Acidovorax citrulli).